The sequence spans 490 residues: Interferon-induced protein with tetratricopeptide repeats 3 (490 aa).

TPR repeat units follow at residues 51–84 (ATMY…IQQE), 94–127 (LVTW…CKKF), 136–169 (SELD…KPNN), 172–206 (FSSG…SPDN), 207–240 (QYVK…SPCQ), 241–274 (TDVL…TPNN), 415–448 (PNYW…LLRD), and 450–481 (PSGI…SPRE). Ser-203 and Ser-237 each carry phosphoserine. The tract at residues 467–490 (SEEMGQGAVSSSPRELLSNSEQLN) is disordered. Positions 474 to 490 (AVSSSPRELLSNSEQLN) are enriched in polar residues. At Ser-478 the chain carries Phosphoserine.

The protein belongs to the IFIT family. As to quaternary structure, component of an interferon-dependent multiprotein complex, at least composed of IFIT1, IFIT2 and IFIT3. Interacts with IFIT1 and IFIT2. Interacts (via N-terminus) with MAVS, TBK1, TRAF6 and RIGI. Interacts with COPS5. As to expression, expression significantly higher in peripheral blood mononuclear cells (PBMCs) and monocytes from systemic lupus erythematosus (SLE) patients than in those from healthy individuals (at protein level). Spleen, lung, leukocytes, lymph nodes, placenta, bone marrow and fetal liver.

It is found in the cytoplasm. It localises to the mitochondrion. Functionally, IFN-induced antiviral protein which acts as an inhibitor of cellular as well as viral processes, cell migration, proliferation, signaling, and viral replication. Enhances MAVS-mediated host antiviral responses by serving as an adapter bridging TBK1 to MAVS which leads to the activation of TBK1 and phosphorylation of IRF3 and phosphorylated IRF3 translocates into nucleus to promote antiviral gene transcription. Exhibits an antiproliferative activity via the up-regulation of cell cycle negative regulators CDKN1A/p21 and CDKN1B/p27. Normally, CDKN1B/p27 turnover is regulated by COPS5, which binds CDKN1B/p27 in the nucleus and exports it to the cytoplasm for ubiquitin-dependent degradation. IFIT3 sequesters COPS5 in the cytoplasm, thereby increasing nuclear CDKN1B/p27 protein levels. Up-regulates CDKN1A/p21 by down-regulating MYC, a repressor of CDKN1A/p21. Can negatively regulate the apoptotic effects of IFIT2. This Homo sapiens (Human) protein is Interferon-induced protein with tetratricopeptide repeats 3 (IFIT3).